The chain runs to 81 residues: Consomatin Le1 (81 aa).

An N-terminal signal peptide occupies residues 1 to 22 (MQTAYWVMVMMMVWITAPLSEG). Positions 23-57 (GKPNDVIRGLVPDDLTPQLILRSLISRRRSDKDVR) are excised as a propeptide. The residue at position 58 (Glu58) is a 4-carboxyglutamate. Cys62 and Cys67 are disulfide-bonded. Trp64 carries the D-tryptophan modification. Pro69 carries the 4-hydroxyproline modification. The propeptide occupies 71–81 (LWRRHDLKGKD).

Belongs to the conotoxin C superfamily. Consomatin family. In terms of tissue distribution, expressed by the venom duct.

It is found in the secreted. Functionally, moderately activates human somatostatin receptors (SSTR) with a preferential activation of SSTR1 and SSTR4. In vivo, does not cause behavioral changes in mice within a few minutes of intracranial injection, but causes a progressive loss of movement thereafter. Four to five hours after injection, mice recover, even with the highest dose tested. Shows antinociception and antihyperalgesia activities in two mouse models of acute pain, most probably by acting outside the central nervous system. This chain is Consomatin Le1, found in Conus lenavati (Cone snail).